The following is a 226-amino-acid chain: Choline transport system permease protein OpuBD (226 aa).

Residues 22-202 (FGRHFLMSAY…VMAVGADLLM (181 aa)) form the ABC transmembrane type-1 domain. A run of 5 helical transmembrane segments spans residues 27–47 (LMSA…GILI), 52–72 (RLSA…ALAM), 73–93 (LAVL…SLFL), 148–168 (ALVI…GGLG), and 182–202 (AIIL…DLLM).

The protein belongs to the binding-protein-dependent transport system permease family. CysTW subfamily.

It is found in the cell membrane. Functionally, involved in a high affinity multicomponent binding-protein-dependent transport system for choline; probably responsible for the translocation of the substrate across the membrane. The sequence is that of Choline transport system permease protein OpuBD (opuBD) from Bacillus subtilis (strain 168).